We begin with the raw amino-acid sequence, 358 residues long: Protein-glutamate methylesterase/protein-glutamine glutaminase 2 (358 aa).

The region spanning Arg-8 to Glu-125 is the Response regulatory domain. Residue Asp-59 is modified to 4-aspartylphosphate. The region spanning Pro-157–Ala-352 is the CheB-type methylesterase domain. Active-site residues include Ser-177, His-203, and Asp-299.

Belongs to the CheB family. Post-translationally, phosphorylated by CheA. Phosphorylation of the N-terminal regulatory domain activates the methylesterase activity.

It is found in the cytoplasm. The catalysed reaction is [protein]-L-glutamate 5-O-methyl ester + H2O = L-glutamyl-[protein] + methanol + H(+). It catalyses the reaction L-glutaminyl-[protein] + H2O = L-glutamyl-[protein] + NH4(+). In terms of biological role, involved in chemotaxis. Part of a chemotaxis signal transduction system that modulates chemotaxis in response to various stimuli. Catalyzes the demethylation of specific methylglutamate residues introduced into the chemoreceptors (methyl-accepting chemotaxis proteins or MCP) by CheR. Also mediates the irreversible deamidation of specific glutamine residues to glutamic acid. The chain is Protein-glutamate methylesterase/protein-glutamine glutaminase 2 from Xanthomonas oryzae pv. oryzae (strain MAFF 311018).